The sequence spans 264 residues: Phosphatidylglycerol--prolipoprotein diacylglyceryl transferase (264 aa).

The next 4 helical transmembrane spans lie at 17-37, 57-77, 89-109, and 118-138; these read LAIH…YLLG, LIFY…VLFY, IAFL…VILV, and GVSF…GLGA. Arginine 140 contacts a 1,2-diacyl-sn-glycero-3-phospho-(1'-sn-glycerol). Transmembrane regions (helical) follow at residues 173–193, 201–221, and 237–257; these read PSQL…LWWF, GQVS…VEFT, and MGQW…VLTA.

It belongs to the Lgt family.

Its subcellular location is the cell inner membrane. The enzyme catalyses L-cysteinyl-[prolipoprotein] + a 1,2-diacyl-sn-glycero-3-phospho-(1'-sn-glycerol) = an S-1,2-diacyl-sn-glyceryl-L-cysteinyl-[prolipoprotein] + sn-glycerol 1-phosphate + H(+). The protein operates within protein modification; lipoprotein biosynthesis (diacylglyceryl transfer). Catalyzes the transfer of the diacylglyceryl group from phosphatidylglycerol to the sulfhydryl group of the N-terminal cysteine of a prolipoprotein, the first step in the formation of mature lipoproteins. The chain is Phosphatidylglycerol--prolipoprotein diacylglyceryl transferase from Bordetella avium (strain 197N).